A 249-amino-acid polypeptide reads, in one-letter code: 1-(5-phosphoribosyl)-5-[(5-phosphoribosylamino)methylideneamino] imidazole-4-carboxamide isomerase (249 aa).

D10 functions as the Proton acceptor in the catalytic mechanism. D131 (proton donor) is an active-site residue.

Belongs to the HisA/HisF family.

It is found in the cytoplasm. The catalysed reaction is 1-(5-phospho-beta-D-ribosyl)-5-[(5-phospho-beta-D-ribosylamino)methylideneamino]imidazole-4-carboxamide = 5-[(5-phospho-1-deoxy-D-ribulos-1-ylimino)methylamino]-1-(5-phospho-beta-D-ribosyl)imidazole-4-carboxamide. It functions in the pathway amino-acid biosynthesis; L-histidine biosynthesis; L-histidine from 5-phospho-alpha-D-ribose 1-diphosphate: step 4/9. This Brevibacillus brevis (strain 47 / JCM 6285 / NBRC 100599) protein is 1-(5-phosphoribosyl)-5-[(5-phosphoribosylamino)methylideneamino] imidazole-4-carboxamide isomerase.